Consider the following 84-residue polypeptide: uncharacterized protein (84 aa).

This is an uncharacterized protein from Rickettsia prowazekii (strain Madrid E).